Consider the following 761-residue polypeptide: uncharacterized protein (761 aa).

TPR repeat units follow at residues 35–68 (EEGKILLGIYHFLSGEPQKAEELLSQVSENSLNS), 69–102 (AQGLSDLGLLYFFLGRVEDAERVLKKALKFSDVD), 103–136 (DALYARLGALYYSQGKLEEAQHYWERALSLNPNK), 137–170 (VEILYNLGVLHLNKGELEKALDLFERALRLKPDF), 172–203 (EAEEKKTLILLSLNRIDELVEEYYRELEKNPN), 204–237 (EEVYIKLGNTLYTAGRLAEARAVFQEGAEKFPHD), 351–384 (LGVLQELVHVLTSIGELEEAKEIQSQIVAINPSA), and 419–452 (ASAGFVLHKVLEKRKDYDKAFEVLIKANELVKEE). The tract at residues 487–761 (KRPIFVLGMP…PKGLVGYTVG (275 aa)) is protein sulfotransferase-like.

In the C-terminal section; belongs to the protein sulfotransferase family.

This is an uncharacterized protein from Aquifex aeolicus (strain VF5).